Reading from the N-terminus, the 466-residue chain is MDKKQVTDLRSELLDSRFGAKSISTIAESKRFPLHEMRDDVAFQIINDELYLDGNARQNLATFCQTWDDENVHKLMDLSINKNWIDKEEYPQSAAIDLRCVNMVADLWHAPAPKNGQAVGTNTIGSSEACMLGGMAMKWRWRKRMEAAGKPTDKPNLVCGPVQICWHKFARYWDVELREIPMRPGQLFMDPKRMIEACDENTIGVVPTFGVTYTGNYEFPQPLHDALDKFQADTGIDIDMHIDAASGGFLAPFVAPDIVWDFRLPRVKSISASGHKFGLAPLGCGWVIWRDEEALPQELVFNVDYLGGQIGTFAINFSRPAGQVIAQYYEFLRLGREGYTKVQNASYQVAAYLADEIAKLGPYEFICTGRPDEGIPAVCFKLKDGEDPGYTLYDLSERLRLRGWQVPAFTLGGEATDIVVMRIMCRRGFEMDFAELLLEDYKASLKYLSDHPKLQGIAQQNSFKHT.

Residues Thr-62 and Asn-83 each contribute to the substrate site. Residues 126 to 127, Thr-212, and His-275 contribute to the pyridoxal 5'-phosphate site; that span reads SS. Position 276 is an N6-(pyridoxal phosphate)lysine (Lys-276). N6-acetyllysine is present on residues Lys-446, Lys-453, and Lys-464.

The protein belongs to the group II decarboxylase family. Homohexamer composed of three dimers. The cofactor is pyridoxal 5'-phosphate.

It catalyses the reaction L-glutamate + H(+) = 4-aminobutanoate + CO2. In terms of biological role, converts glutamate to gamma-aminobutyrate (GABA), consuming one intracellular proton in the reaction. The gad system helps to maintain a near-neutral intracellular pH when cells are exposed to extremely acidic conditions. The ability to survive transit through the acidic conditions of the stomach is essential for successful colonization of the mammalian host by commensal and pathogenic bacteria. This chain is Glutamate decarboxylase beta (gadB), found in Shigella flexneri.